We begin with the raw amino-acid sequence, 473 residues long: Cannabinoid receptor 1 (473 aa).

Residues 1–121 (MKSILDGLAD…LNPSQQLAIA (121 aa)) lie on the Extracellular side of the membrane. Positions 2–23 (KSILDGLADTTFRTITTDLLYV) are required for mitochondrial localization. N-linked (GlcNAc...) asparagine glycosylation is found at N78 and N84. Residues 122 to 142 (VLSLTLGTFTVLENLLVLCVI) form a helical membrane-spanning segment. Topologically, residues 143–155 (LHSRSLRCRPSYH) are cytoplasmic. A helical transmembrane segment spans residues 156 to 176 (FIGSLAVADLLGSVIFVYSFV). At 177 to 188 (DFHVFHRKDSPN) the chain is on the extracellular side. A helical membrane pass occupies residues 189–209 (VFLFKLGGVTASFTASVGSLF). Over 210 to 233 (LTAIDRYISIHRPLAYKRIVTRPK) the chain is Cytoplasmic. The chain crosses the membrane as a helical span at residues 234 to 254 (AVVAFCLMWTIAIVIAVLPLL). Residues 255 to 278 (GWNCKKLQSVCSDIFPLIDETYLM) lie on the Extracellular side of the membrane. Residues 279–299 (FWIGVTSVLLLFIVYAYMYIL) traverse the membrane as a helical segment. Residues 300–345 (WKAHSHAVRMIQRGTQKSIIIHTSEDGKVQVTRPDQARMDIRLAKT) are Cytoplasmic-facing. A helical membrane pass occupies residues 346-366 (LVLILVVLIICWGPLLAIMVY). At 367–378 (DVFGKMNKLIKT) the chain is on the extracellular side. The chain crosses the membrane as a helical span at residues 379–399 (VFAFCSMLCLLNSTVNPIIYA). Over 400 to 473 (LRSKDLRHAF…VSTDTSAEAL (74 aa)) the chain is Cytoplasmic. The S-palmitoyl cysteine moiety is linked to residue C416. 2 positions are modified to phosphoserine: S426 and S430.

Belongs to the G-protein coupled receptor 1 family. Interacts (via C-terminus) with CNRIP1. Associates with G protein alpha subunits, including G(i) alpha-1/GNAI1, G(i) alpha-3/GNAI3 and G(o)-alpha/GNAO1; palmitoylation is important for interaction with GNAI3 and GNAO1. Palmitoylation at Cys-416 is important for recruitment at both plasma membrane and lipid rafts and association with G protein alpha subunits. Expressed in brain neurons (at protein level). Detected throughout the striatum, cortex and hippocampus, with highest levels in the lateral striatum. In rostral brain regions, high expression levels in the dorsal lateral striatum, while in the caudal brain regions, high levels are observed in the ventral lateral striatum. Expressed in neurons. In the hypothalamus, expressed in both GABAergic and glutamatergic presynaptic terminals of POMC neurons (at protein level). Expressed in striated muscles, including skeletal muscles (gastrocnemius and rectus abdominis) and myocardium (at protein level). Expressed in the liver, with highest levels in Kupffer cells and lower levels in endothelial cells as well as hepatocytes, particularly in perivascular areas (at protein level). The hepatic expression level is up-regulated in obese mice compared to lean animals.

It is found in the cell membrane. The protein resides in the mitochondrion outer membrane. Its subcellular location is the cell projection. It localises to the axon. The protein localises to the presynapse. Hemopressin, a peptide derived from hemoglobin subunit alpha (HBA1 and/or HBA2), acts as an antagonist peptide: hemopressin-binding efficiently blocks cannabinoid receptor CNR1 and subsequent signaling. G-protein coupled receptor for cannabinoids, including endocannabinoids (eCBs), such as N-arachidonoylethanolamide (also called anandamide or AEA) and 2-arachidonoylglycerol (2-AG). Mediates many cannabinoid-induced effects, acting, among others, on food intake, memory loss, gastrointestinal motility, catalepsy, ambulatory activity, anxiety, chronic pain. Signaling typically involves reduction in cyclic AMP. In the hypothalamus, may have a dual effect on mitochondrial respiration depending upon the agonist dose and possibly upon the cell type. Increases respiration at low doses, while decreases respiration at high doses. At high doses, CNR1 signal transduction involves G-protein alpha-i protein activation and subsequent inhibition of mitochondrial soluble adenylate cyclase, decrease in cyclic AMP concentration, inhibition of protein kinase A (PKA)-dependent phosphorylation of specific subunits of the mitochondrial electron transport system, including NDUFS2. In the hypothalamus, inhibits leptin-induced reactive oxygen species (ROS) formation and mediates cannabinoid-induced increase in SREBF1 and FASN gene expression. In response to cannabinoids, drives the release of orexigenic beta-endorphin, but not that of melanocyte-stimulating hormone alpha/alpha-MSH, from hypothalamic POMC neurons, hence promoting food intake. In the hippocampus, regulates cellular respiration and energy production in response to cannabinoids. Involved in cannabinoid-dependent depolarization-induced suppression of inhibition (DSI), a process in which depolarization of CA1 postsynaptic pyramidal neurons mobilizes eCBs, which retrogradely activate presynaptic CB1 receptors, transiently decreasing GABAergic inhibitory neurotransmission. Also reduces excitatory synaptic transmission. In superior cervical ganglions and cerebral vascular smooth muscle cells, inhibits voltage-gated Ca(2+) channels in a constitutive, as well as agonist-dependent manner. In cerebral vascular smooth muscle cells, cannabinoid-induced inhibition of voltage-gated Ca(2+) channels leads to vasodilation and decreased vascular tone. Induces leptin production in adipocytes and reduces LRP2-mediated leptin clearance in the kidney, hence participating in hyperleptinemia. In adipose tissue, CNR1 signaling leads to increased expression of SREBF1, ACACA and FASN genes. In the liver, activation by endocannabinoids leads to increased de novo lipogenesis and reduced fatty acid catabolism, associated with increased expression of SREBF1/SREBP-1, GCK, ACACA, ACACB and FASN genes. May also affect de novo cholesterol synthesis and HDL-cholesteryl ether uptake. Peripherally modulates energy metabolism. In high carbohydrate diet-induced obesity, may decrease the expression of mitochondrial dihydrolipoyl dehydrogenase/DLD in striated muscles, as well as that of selected glucose/ pyruvate metabolic enzymes, hence affecting energy expenditure through mitochondrial metabolism. In response to cannabinoid anandamide, elicits a pro-inflammatory response in macrophages, which involves NLRP3 inflammasome activation and IL1B and IL18 secretion. In macrophages infiltrating pancreatic islets, this process may participate in the progression of type-2 diabetes and associated loss of pancreatic beta-cells. In Mus musculus (Mouse), this protein is Cannabinoid receptor 1 (Cnr1).